Here is a 787-residue protein sequence, read N- to C-terminus: Lon protease (787 aa).

Positions 12 to 210 (LPLIPLRGLA…LIYSILLEEI (199 aa)) constitute a Lon N-terminal domain. 362-369 (GPPGTGKT) provides a ligand contact to ATP. A Lon proteolytic domain is found at 599-780 (NPQIGLVNGL…DEVLEQALLK (182 aa)). Residues S686 and K729 contribute to the active site.

Belongs to the peptidase S16 family. Homohexamer. Organized in a ring with a central cavity.

The protein resides in the cytoplasm. The enzyme catalyses Hydrolysis of proteins in presence of ATP.. In terms of biological role, ATP-dependent serine protease that mediates the selective degradation of mutant and abnormal proteins as well as certain short-lived regulatory proteins. Required for cellular homeostasis and for survival from DNA damage and developmental changes induced by stress. Degrades polypeptides processively to yield small peptide fragments that are 5 to 10 amino acids long. Binds to DNA in a double-stranded, site-specific manner. This Clostridioides difficile (strain 630) (Peptoclostridium difficile) protein is Lon protease.